The following is a 397-amino-acid chain: Lysophospholipid transporter LplT (397 aa).

Over 1–17 the chain is Periplasmic; the sequence is MSESVHTNTSLWSKGMK. A helical membrane pass occupies residues 18–38; sequence AVIVAQFLSAFGDNALLFATL. Residues 39 to 52 are Cytoplasmic-facing; the sequence is ALLKAQFYPEWSQP. A helical membrane pass occupies residues 53–73; that stretch reads ILQMVFVGAYILFAPFVGQVA. The Periplasmic portion of the chain corresponds to 74 to 90; that stretch reads DSFAKGRVMMFANGLKL. The helical transmembrane segment at 91–111 threads the bilayer; it reads LGAASICFGINPFLGYTLVGV. Residues 112 to 144 are Cytoplasmic-facing; it reads GAAAYSPAKYGILGELTTGSKLVKANGLMEAST. Residues 145–165 form a helical membrane-spanning segment; that stretch reads IAAILLGSVAGGVLADWHVLV. Alanine 166 is a topological domain (periplasmic). A helical transmembrane segment spans residues 167–187; that stretch reads LAACALAYGGAVVANIYIPKL. Topologically, residues 188–226 are cytoplasmic; the sequence is AAARPGQSWNLISMTRSFLNACTSLWRNGETRFSLVGTS. Residues 227–247 traverse the membrane as a helical segment; sequence LFWGAGVTLRFLLVLWVPVAL. Topologically, residues 248-256 are periplasmic; that stretch reads GITDNATPT. A helical membrane pass occupies residues 257–277; that stretch reads YLNAMVAIGIVVGAGAAAKLV. At 278 to 280 the chain is on the cytoplasmic side; the sequence is TLE. Residues 281-301 traverse the membrane as a helical segment; that stretch reads TVSRCMPAGILIGVVVLIFSL. The Periplasmic portion of the chain corresponds to 302–304; the sequence is QHE. The helical transmembrane segment at 305 to 325 threads the bilayer; sequence LLPAYALLMLIGVLGGFFVVP. The Cytoplasmic segment spans residues 326 to 343; it reads LNALLQERGKKSVGAGNA. Residues 344-364 form a helical membrane-spanning segment; that stretch reads IAVQNLGENSAMLLMLGIYSL. At 365 to 366 the chain is on the periplasmic side; the sequence is AV. The helical transmembrane segment at 367–387 threads the bilayer; that stretch reads MVGIPVVPIGIGFGALFALAI. Over 388–397 the chain is Cytoplasmic; sequence TALWIWQRRH.

Belongs to the major facilitator superfamily. LplT (TC 2.A.1.42) family.

Its subcellular location is the cell inner membrane. Catalyzes the facilitated diffusion of 2-acyl-glycero-3-phosphoethanolamine (2-acyl-GPE) into the cell. The sequence is that of Lysophospholipid transporter LplT from Escherichia coli O7:K1 (strain IAI39 / ExPEC).